Here is a 348-residue protein sequence, read N- to C-terminus: Sulfate/thiosulfate import ATP-binding protein CysA (348 aa).

Positions 3–237 (IRIQELCKQF…PSSPFVYSFV (235 aa)) constitute an ABC transporter domain. Residue 35–42 (GPSGSGKT) coordinates ATP.

This sequence belongs to the ABC transporter superfamily. Sulfate/tungstate importer (TC 3.A.1.6) family. As to quaternary structure, the complex is composed of two ATP-binding proteins (CysA), two transmembrane proteins (CysT and CysW) and a solute-binding protein (CysP).

Its subcellular location is the cell inner membrane. It carries out the reaction sulfate(out) + ATP + H2O = sulfate(in) + ADP + phosphate + H(+). It catalyses the reaction thiosulfate(out) + ATP + H2O = thiosulfate(in) + ADP + phosphate + H(+). Its function is as follows. Part of the ABC transporter complex CysAWTP involved in sulfate/thiosulfate import. Responsible for energy coupling to the transport system. This is Sulfate/thiosulfate import ATP-binding protein CysA from Xylella fastidiosa (strain 9a5c).